A 440-amino-acid chain; its full sequence is Trigger factor (440 aa).

One can recognise a PPIase FKBP-type domain in the interval glycine 163–proline 248.

The protein belongs to the FKBP-type PPIase family. Tig subfamily.

It localises to the cytoplasm. The catalysed reaction is [protein]-peptidylproline (omega=180) = [protein]-peptidylproline (omega=0). In terms of biological role, involved in protein export. Acts as a chaperone by maintaining the newly synthesized protein in an open conformation. Functions as a peptidyl-prolyl cis-trans isomerase. The chain is Trigger factor from Lactiplantibacillus plantarum (strain ATCC BAA-793 / NCIMB 8826 / WCFS1) (Lactobacillus plantarum).